The chain runs to 368 residues: MPLVRLDISHVRNLSSVRFEPSPQVNVIVGKNGSGKTSVLEAIHLLSFGRSFRSHKHKTYIQHENDACIVFAQLHQKQGSPIRVGLQRHRDGQIDVRIQGQRAQSVIELAERLPVQLINPDAFRLLEGSPSIRRQFIDWGAFHFDKDFIQAWRGWQKALKQRNTLLRRGKISLSLLAAFDQELIRLGEQVNQSRKAYVEKLTPHFVKVLSLLTTELSVSLQFFQGWDAQKNLAMAVEAGRERDIELGYTHTGPQRADLRVKTATGDALDTLSRGQQKLVVSALKIAQGQLLIDMGRPLVFLVDDLPAELDANHRQKLCQLLESLNSQIFITSVEPDTTDFTWADTTDVRQFSMTNGELSLLSKGLQES.

30–37 (GKNGSGKT) is a binding site for ATP.

It belongs to the RecF family.

The protein localises to the cytoplasm. The RecF protein is involved in DNA metabolism; it is required for DNA replication and normal SOS inducibility. RecF binds preferentially to single-stranded, linear DNA. It also seems to bind ATP. This is DNA replication and repair protein RecF from Marinomonas sp. (strain MWYL1).